We begin with the raw amino-acid sequence, 154 residues long: Transcription antitermination protein NusB (154 aa).

The protein belongs to the NusB family.

In terms of biological role, involved in transcription antitermination. Required for transcription of ribosomal RNA (rRNA) genes. Binds specifically to the boxA antiterminator sequence of the ribosomal RNA (rrn) operons. In Bordetella parapertussis (strain 12822 / ATCC BAA-587 / NCTC 13253), this protein is Transcription antitermination protein NusB.